The primary structure comprises 321 residues: CRISPR-associated endonuclease Cas1 2 (321 aa).

Residues Glu-150, His-213, and Glu-228 each coordinate Mn(2+).

The protein belongs to the CRISPR-associated endonuclease Cas1 family. In terms of assembly, homodimer, forms a heterotetramer with a Cas2 homodimer. The cofactor is Mg(2+). Mn(2+) serves as cofactor.

Functionally, CRISPR (clustered regularly interspaced short palindromic repeat), is an adaptive immune system that provides protection against mobile genetic elements (viruses, transposable elements and conjugative plasmids). CRISPR clusters contain spacers, sequences complementary to antecedent mobile elements, and target invading nucleic acids. CRISPR clusters are transcribed and processed into CRISPR RNA (crRNA). Acts as a dsDNA endonuclease. Involved in the integration of spacer DNA into the CRISPR cassette. This is CRISPR-associated endonuclease Cas1 2 from Moorella thermoacetica (strain ATCC 39073 / JCM 9320).